Consider the following 336-residue polypeptide: Alpha-glucoside transport system permease protein AglF (336 aa).

The next 8 helical transmembrane spans lie at L4–S24, P55–V75, F113–L133, L146–Y166, I176–L196, F202–A222, I258–A278, and F304–W324. The region spanning I109–N325 is the ABC transmembrane type-1 domain.

Belongs to the binding-protein-dependent transport system permease family. MalFG subfamily.

The protein resides in the cell inner membrane. Part of the binding-protein-dependent transport system for alpha-glucosides such as sucrose, maltose and trehalose. Probably responsible for the translocation of the substrate across the membrane. This is Alpha-glucoside transport system permease protein AglF (aglF) from Rhizobium meliloti (strain 1021) (Ensifer meliloti).